Consider the following 74-residue polypeptide: Conotoxin Vt11.7 (74 aa).

The N-terminal stretch at 1 to 26 (MMFRLTSVGCFLLVIVLLNVAVLTNA) is a signal peptide. 4 cysteine pairs are disulfide-bonded: C28-C42, C35-C47, C41-C51, and C46-C55. The propeptide occupies 62-74 (AHGHGLLRFWGQR).

The protein belongs to the conotoxin I2 superfamily. As to expression, expressed by the venom duct.

The protein resides in the secreted. The polypeptide is Conotoxin Vt11.7 (Conus planorbis (Planorbis cone)).